Reading from the N-terminus, the 491-residue chain is UDP-N-acetylmuramate--L-alanine ligase (491 aa).

126 to 132 (GTHGKTT) contributes to the ATP binding site.

This sequence belongs to the MurCDEF family.

Its subcellular location is the cytoplasm. It catalyses the reaction UDP-N-acetyl-alpha-D-muramate + L-alanine + ATP = UDP-N-acetyl-alpha-D-muramoyl-L-alanine + ADP + phosphate + H(+). It participates in cell wall biogenesis; peptidoglycan biosynthesis. Its function is as follows. Cell wall formation. The chain is UDP-N-acetylmuramate--L-alanine ligase from Escherichia coli O7:K1 (strain IAI39 / ExPEC).